Here is an 88-residue protein sequence, read N- to C-terminus: MDPMKAQQLAAELEVEMMADMYNRMTNACHRKCVPPHYKEAELSKGEAVCLDRCVAKYLDLHERLGRKLTELSVQDEEVMRKAAAGTG.

The Twin CX3C motif motif lies at 29–54 (CHRKCVPPHYKEAELSKGEAVCLDRC). Cystine bridges form between Cys29–Cys54 and Cys33–Cys50.

It belongs to the small Tim family. Heterohexamer; composed of 3 copies of TIMM9 and 3 copies of TIMM10/TIM10A, named soluble 70 kDa complex. The complex forms a 6-bladed alpha-propeller structure and associates with the TIMM22 component of the TIM22 complex. Interacts with multi-pass transmembrane proteins in transit.

It localises to the mitochondrion inner membrane. Its function is as follows. Mitochondrial intermembrane chaperone that participates in the import and insertion of multi-pass transmembrane proteins into the mitochondrial inner membrane. May also be required for the transfer of beta-barrel precursors from the TOM complex to the sorting and assembly machinery (SAM complex) of the outer membrane. Acts as a chaperone-like protein that protects the hydrophobic precursors from aggregation and guide them through the mitochondrial intermembrane space. This is Mitochondrial import inner membrane translocase subunit Tim10 (timm10) from Danio rerio (Zebrafish).